Reading from the N-terminus, the 1469-residue chain is WASH complex subunit 2 (1469 aa).

Ser136 is subject to Phosphoserine. 2 disordered regions span residues 178-349 and 367-546; these read YDSK…RMPV and KVQS…RVAG. The segment covering 197–206 has biased composition (basic and acidic residues); sequence SDEKEPETKK. Ser227 carries the phosphoserine modification. Composition is skewed to low complexity over residues 276–293 and 306–316; these read SPPS…TSSP and STASLSSSSSS. The LFa 1 motif lies at 351 to 372; it reads LFNEDEFKSFMSEIVDKVQSKT. Polar residues predominate over residues 370-385; the sequence is SKTPSSSVSPATTIST. The span at 387-399 shows a compositional bias: basic and acidic residues; it reads EPPKTKKPVEEYP. A phosphoserine mark is found at Ser422 and Ser426. A compositionally biased stretch (acidic residues) spans 519–528; it reads FDDDDLDIDD. Residues 550 to 563 carry the LFa 5 motif; sequence LFEDDDQDDVTDLF. A disordered region spans residues 571-591; the sequence is IPKETSSGVSPNKNVETPVAS. The span at 574–585 shows a compositional bias: polar residues; it reads ETSSGVSPNKNV. Ser580 is modified (phosphoserine). Thr587 carries the post-translational modification Phosphothreonine. The LFa 6 signature appears at 595–605; the sequence is LFDDIEDEDLF. Disordered regions lie at residues 607–760, 933–1254, and 1316–1469; these read TPKA…TDLF, ALPN…KLFS, and VTTA…LDFK. Composition is skewed to basic and acidic residues over residues 626–649 and 671–687; these read GEDK…EKQH and TEQK…KDDT. A Phosphothreonine modification is found at Thr693. Positions 698-709 match the LFa 8 motif; it reads LFSEDLTDDELF. Composition is skewed to polar residues over residues 709–728, 735–745, and 938–956; these read FSST…TNEF, YTSQTEENVSP, and PSAT…SVSS. Composition is skewed to basic and acidic residues over residues 971–990, 1031–1042, and 1077–1089; these read DNDH…KDEL, ETDRSEVKETPE, and RKQE…RDEP. Over residues 1091–1109 the composition is skewed to polar residues; the sequence is ATVQTEAEAPSSGQNTVSS. The span at 1118 to 1136 shows a compositional bias: basic residues; sequence NKSRARGPAKRRPSTRRGR. The span at 1159–1170 shows a compositional bias: basic and acidic residues; sequence DSPEVEHSERSS. 7 positions are modified to phosphoserine: Ser1241, Ser1245, Ser1254, Ser1344, Ser1380, Ser1381, and Ser1408. Composition is skewed to low complexity over residues 1417–1426 and 1434–1452; these read FGGSSTSKAA and AART…PTAT.

It belongs to the FAM21 family. Component of the WASH complex.

Its function is as follows. Acts at least in part as component of the WASH complex which may regulate wash nucleation-promoting factor (NPF) activity and is required for its membrane targeting during endosomal sorting. The chain is WASH complex subunit 2 from Drosophila melanogaster (Fruit fly).